The sequence spans 504 residues: Fumitremorgin C monooxygenase (504 aa).

The helical transmembrane segment at 12 to 32 (LGVVGASLIVILGIILLFPLG) threads the bilayer. Cysteine 442 serves as a coordination point for heme.

It belongs to the cytochrome P450 family. Requires heme as cofactor.

The protein localises to the membrane. It catalyses the reaction fumitremorgin C + 2 reduced [NADPH--hemoprotein reductase] + 2 O2 = 12alpha,13alpha-dihydroxyfumitremorgin C + 2 oxidized [NADPH--hemoprotein reductase] + 2 H2O + 2 H(+). It functions in the pathway mycotoxin biosynthesis. Its function is as follows. Cytochrome P450 monooxygenase; part of the gene cluster that mediates the biosynthesis of fumitremorgins, indole alkaloids that carry not only intriguing chemical structures, but also interesting biological and pharmacological activities. The biosynthesis of fumitremorgin-type alkaloids begins by condensation of the two amino acids L-tryptophan and L-proline to brevianamide F, catalyzed by the non-ribosomal peptide synthetase ftmA. Brevianamide F is then prenylated by the prenyltransferase ftmPT1/ftmB in the presence of dimethylallyl diphosphate, resulting in the formation of tryprostatin B. The three cytochrome P450 monooxygenases, ftmP450-1/ftmC, ftmP450-2/ftmE and ftmP450-3/FtmG, are responsible for the conversion of tryprostatin B to 6-hydroxytryprostatin B, tryprostatin A to fumitremorgin C and fumitremorgin C to 12,13-dihydroxyfumitremorgin C, respectively. The putative methyltransferase ftmMT/ftmD is expected for the conversion of 6-hydroxytryprostatin B to tryprostatin A. FtmPT2/FtmH catalyzes the prenylation of 12,13-dihydroxyfumitre-morgin C in the presence of dimethylallyl diphosphate, resulting in the formation of fumitremorgin B. Fumitremorgin B is further converted to verruculogen by ftmOx1/ftmF via the insertion of an endoperoxide bond between the two prenyl moieties. In some fungal species, verruculogen is further converted to fumitremorgin A, but the enzymes involved in this step have not been identified yet. The polypeptide is Fumitremorgin C monooxygenase (Aspergillus fumigatus (Neosartorya fumigata)).